The primary structure comprises 351 residues: Transmembrane protein 115 (351 aa).

Topologically, residues 1–19 (MQRALPGARQHLGAILASA) are cytoplasmic. Residues 1–205 (MQRALPGARQ…FGLLSSWVYL (205 aa)) form a mediates homooligomerization region. The chain crosses the membrane as a helical span at residues 20-40 (SVVVKALCAAVLFLYLLSFAV). Over 41–97 (DTGCLAVTPGYLFPPNFWIWTLATHGLMEQHVWDVAISLTTVVVAGRLLEPLWGALE) the chain is Lumenal. Residues 98-118 (LLIFFSVVNVSVGLLGAFAYL) traverse the membrane as a helical segment. At 119–126 (LTYMASFN) the chain is on the cytoplasmic side. A helical membrane pass occupies residues 127–147 (LVYLFTVRIHGALGFLGGVLV). At 148–165 (ALKQTMGDCVVLRVPQVR) the chain is on the lumenal side. The chain crosses the membrane as a helical span at residues 166–186 (VSVMPMLLLALLLLLRLATLL). At 187-351 (QSPALASYGF…ITFEAAPPTL (165 aa)) the chain is on the cytoplasmic side. The mediates localization to the Golgi stretch occupies residues 206–229 (RFYQRHSRGRGDMADHFAFATFFP). Residues 301–351 (QSIWPSMDDDEEESGAKVDSPLPSDKAPTPPGKGAAPESSLITFEAAPPTL) are disordered. Position 329 is a phosphothreonine (Thr-329).

It belongs to the TMEM115 family. In terms of assembly, homooligomer. Interacts with COPB1. May interact with LMAN1. Interacts with the COG complex; probably through COG3. Expressed strongly in kidney and skeletal muscle, followed by liver, placenta, pancreas, and lung, with low amounts in heart and only traces in brain. Widely expressed with ubiquitous expression in epithelial tissues (at protein level).

Its subcellular location is the golgi apparatus. It localises to the golgi stack membrane. Its function is as follows. May play a role in retrograde transport of proteins from the Golgi to the endoplasmic reticulum. May indirectly play a role in protein glycosylation in the Golgi. In Homo sapiens (Human), this protein is Transmembrane protein 115.